The sequence spans 443 residues: Trigger factor (443 aa).

Residues 165-250 (GDQIVMDFLG…VKEVKKPVPA (86 aa)) enclose the PPIase FKBP-type domain.

The protein belongs to the FKBP-type PPIase family. Tig subfamily.

The protein localises to the cytoplasm. The catalysed reaction is [protein]-peptidylproline (omega=180) = [protein]-peptidylproline (omega=0). Its function is as follows. Involved in protein export. Acts as a chaperone by maintaining the newly synthesized protein in an open conformation. Functions as a peptidyl-prolyl cis-trans isomerase. The sequence is that of Trigger factor from Roseobacter denitrificans (strain ATCC 33942 / OCh 114) (Erythrobacter sp. (strain OCh 114)).